Reading from the N-terminus, the 580-residue chain is 2-hydroxyacyl-CoA lyase 1 (580 aa).

Glu-47 is a thiamine diphosphate binding site. Residues 413-494 (TMDIGRLCIP…FIVLNNNGVY (82 aa)) form a thiamine pyrophosphate binding region. Residues Asp-463 and Asn-490 each contribute to the Mg(2+) site.

This sequence belongs to the TPP enzyme family. In terms of assembly, homotetramer. Mg(2+) serves as cofactor. It depends on thiamine diphosphate as a cofactor.

It localises to the peroxisome. It carries out the reaction a 2-hydroxy-3-methyl fatty acyl-CoA = a 2-methyl-branched fatty aldehyde + formyl-CoA. The catalysed reaction is an (R)-2-hydroxy-long-chain-fatty acyl-CoA = a long-chain fatty aldehyde + formyl-CoA. The enzyme catalyses 2-hydroxy-3-methylhexadecanoyl-CoA = 2-methylpentadecanal + formyl-CoA. It catalyses the reaction 2-hydroxyoctadecanoyl-CoA = heptadecanal + formyl-CoA. In terms of biological role, peroxisomal 2-OH acyl-CoA lyase involved in the cleavage (C1 removal) reaction in the fatty acid alpha-oxydation in a thiamine pyrophosphate (TPP)-dependent manner. Involved in the degradation of 3-methyl-branched fatty acids and the shortening of 2-hydroxy long-chain fatty acids. This chain is 2-hydroxyacyl-CoA lyase 1 (hacl1), found in Dictyostelium discoideum (Social amoeba).